Here is a 152-residue protein sequence, read N- to C-terminus: Deoxyuridine 5'-triphosphate nucleotidohydrolase (152 aa).

Residues 71-73, Asn-84, 88-90, and Met-98 each bind substrate; these read RSG and LID.

It belongs to the dUTPase family. It depends on Mg(2+) as a cofactor.

It carries out the reaction dUTP + H2O = dUMP + diphosphate + H(+). It participates in pyrimidine metabolism; dUMP biosynthesis; dUMP from dCTP (dUTP route): step 2/2. In terms of biological role, this enzyme is involved in nucleotide metabolism: it produces dUMP, the immediate precursor of thymidine nucleotides and it decreases the intracellular concentration of dUTP so that uracil cannot be incorporated into DNA. This is Deoxyuridine 5'-triphosphate nucleotidohydrolase from Shewanella denitrificans (strain OS217 / ATCC BAA-1090 / DSM 15013).